The primary structure comprises 356 residues: Chorismate synthase (356 aa).

2 residues coordinate NADP(+): Arg-48 and Arg-54. Residues 125–127 (RSS), 237–238 (NA), Gly-282, 297–301 (KPTSS), and Arg-323 each bind FMN.

It belongs to the chorismate synthase family. Homotetramer. FMNH2 is required as a cofactor.

The enzyme catalyses 5-O-(1-carboxyvinyl)-3-phosphoshikimate = chorismate + phosphate. The protein operates within metabolic intermediate biosynthesis; chorismate biosynthesis; chorismate from D-erythrose 4-phosphate and phosphoenolpyruvate: step 7/7. Catalyzes the anti-1,4-elimination of the C-3 phosphate and the C-6 proR hydrogen from 5-enolpyruvylshikimate-3-phosphate (EPSP) to yield chorismate, which is the branch point compound that serves as the starting substrate for the three terminal pathways of aromatic amino acid biosynthesis. This reaction introduces a second double bond into the aromatic ring system. The polypeptide is Chorismate synthase (Rhizorhabdus wittichii (strain DSM 6014 / CCUG 31198 / JCM 15750 / NBRC 105917 / EY 4224 / RW1) (Sphingomonas wittichii)).